The sequence spans 170 residues: Photosystem I assembly protein Ycf3 (170 aa).

TPR repeat units lie at residues 35 to 68, 72 to 105, and 120 to 153; these read AFCY…EEDP, SYII…NPRL, and GLKA…APNN.

The protein belongs to the Ycf3 family.

The protein localises to the plastid. It is found in the chloroplast thylakoid membrane. In terms of biological role, essential for the assembly of the photosystem I (PSI) complex. May act as a chaperone-like factor to guide the assembly of the PSI subunits. The sequence is that of Photosystem I assembly protein Ycf3 from Gracilaria tenuistipitata var. liui (Red alga).